A 476-amino-acid chain; its full sequence is Aspartyl/glutamyl-tRNA(Asn/Gln) amidotransferase subunit B (476 aa).

Belongs to the GatB/GatE family. GatB subfamily. As to quaternary structure, heterotrimer of A, B and C subunits.

It carries out the reaction L-glutamyl-tRNA(Gln) + L-glutamine + ATP + H2O = L-glutaminyl-tRNA(Gln) + L-glutamate + ADP + phosphate + H(+). The enzyme catalyses L-aspartyl-tRNA(Asn) + L-glutamine + ATP + H2O = L-asparaginyl-tRNA(Asn) + L-glutamate + ADP + phosphate + 2 H(+). Allows the formation of correctly charged Asn-tRNA(Asn) or Gln-tRNA(Gln) through the transamidation of misacylated Asp-tRNA(Asn) or Glu-tRNA(Gln) in organisms which lack either or both of asparaginyl-tRNA or glutaminyl-tRNA synthetases. The reaction takes place in the presence of glutamine and ATP through an activated phospho-Asp-tRNA(Asn) or phospho-Glu-tRNA(Gln). This Geobacillus thermodenitrificans (strain NG80-2) protein is Aspartyl/glutamyl-tRNA(Asn/Gln) amidotransferase subunit B.